Consider the following 61-residue polypeptide: MTVKTLRVTQVRSANGRLETHKACLRGLGLRKPHHTVEVRGTPEILGMISKVSYLLKVEEI.

This sequence belongs to the universal ribosomal protein uL30 family. In terms of assembly, part of the 50S ribosomal subunit.

In Methylococcus capsulatus (strain ATCC 33009 / NCIMB 11132 / Bath), this protein is Large ribosomal subunit protein uL30.